The chain runs to 386 residues: uncharacterized protein (386 aa).

N6-(pyridoxal phosphate)lysine is present on K185.

The protein belongs to the DegT/DnrJ/EryC1 family. Pyridoxal 5'-phosphate serves as cofactor.

This is an uncharacterized protein from Methanocaldococcus jannaschii (strain ATCC 43067 / DSM 2661 / JAL-1 / JCM 10045 / NBRC 100440) (Methanococcus jannaschii).